Here is a 324-residue protein sequence, read N- to C-terminus: Holliday junction branch migration complex subunit RuvB (324 aa).

The segment at 1 to 168 (MEDLALRPKT…FGIVEHLEYY (168 aa)) is large ATPase domain (RuvB-L). 10 residues coordinate ATP: tyrosine 14, isoleucine 15, glycine 48, lysine 51, threonine 52, threonine 53, aspartate 97, threonine 146, tyrosine 168, and arginine 205. Threonine 52 contacts Mg(2+). The tract at residues 169-239 (TPEELAQGVM…RALEALAALG (71 aa)) is small ATPAse domain (RuvB-S). Residues 242 to 324 (ELGLEKRDRE…PPPVGPLLEP (83 aa)) form a head domain (RuvB-H) region. DNA contacts are provided by arginine 297 and arginine 302.

This sequence belongs to the RuvB family. As to quaternary structure, homohexamer. Forms a complex with RuvA. Electron microscopic images suggest 2 closely interacting RuvA tetramers sandwich the HJ DNA; each tetramer associates with an RuvB hexamer. Forms 2 complexes with Holliday junction (HJ) DNA which probably have 1 and 2 RuvA tetramers per complex (called complex I and complex II). Forms an RuvA(8)-RuvB(12)-Holliday junction (HJ) complex. HJ DNA is sandwiched between 2 RuvA tetramers; dsDNA enters through RuvA and exits via RuvB. An RuvB hexamer assembles on each DNA strand where it exits the tetramer. Each RuvB hexamer is contacted by two RuvA subunits (via domain III) on 2 adjacent RuvB subunits; this complex drives branch migration. In the full resolvosome a probable DNA-RuvA(4)-RuvB(12)-RuvC(2) complex forms which resolves the HJ. Mg(2+) is required as a cofactor.

The protein resides in the cytoplasm. It catalyses the reaction ATP + H2O = ADP + phosphate + H(+). With respect to regulation, the activity of RuvB is enhanced by E.coli RuvA. In terms of biological role, the RuvA-RuvB-RuvC complex processes Holliday junction (HJ) DNA during genetic recombination and DNA repair, while the RuvA-RuvB complex plays an important role in the rescue of blocked DNA replication forks via replication fork reversal (RFR). RuvA specifically binds to HJ cruciform DNA, conferring on it an open structure. The RuvB hexamer acts as an ATP-dependent pump, pulling dsDNA into and through the RuvAB complex. RuvB forms 2 homohexamers on either side of HJ DNA bound by 1 or 2 RuvA tetramers; 4 subunits per hexamer contact DNA at a time. Coordinated motions by a converter formed by DNA-disengaged RuvB subunits stimulates ATP hydrolysis and nucleotide exchange. Immobilization of the converter enables RuvB to convert the ATP-contained energy into a lever motion, pulling 2 nucleotides of DNA out of the RuvA tetramer per ATP hydrolyzed, thus driving DNA branch migration. The RuvB motors rotate together with the DNA substrate, which together with the progressing nucleotide cycle form the mechanistic basis for DNA recombination by continuous HJ branch migration. Branch migration allows RuvC to scan DNA until it finds its consensus sequence, where it cleaves and resolves cruciform DNA. Its function is as follows. RuvB is a Mg(2+)-dependent, DNA-dependent ATPase with an equal preference for supercoiled and linear dsDNA; all (d)NTPs tested were efficiently hydrolyzed. Promotes Holliday junction (HJ) dissociation at 60 degrees Celsius in the presence of ATP but not ATP-gamma-S or ADP; (d)ATP, (d)CTP and dTTP also power dissociation in the absence of any RuvA. RuvA stimulates the ATPase of RuvB in the presence of dsDNA and HJ branch migration by RuvB. Excess RuvB stimulates some branch migration in vitro even in the presence of mutant RuvA. This chain is Holliday junction branch migration complex subunit RuvB, found in Thermus thermophilus (strain ATCC 27634 / DSM 579 / HB8).